The chain runs to 842 residues: Type VI secretion system spike protein VgrG2a (842 aa).

The tract at residues 265–291 (RSGAGRPFSESRLRGHRRDARVASVSG) is disordered.

This sequence belongs to the VgrG protein family.

Part of the H2 type VI secretion system (H2-T6SS) specialized secretion system, which delivers several virulence factors in both prokaryotic and eukaryotic cells during infection. May form the spike at the tip of the elongating tube formed by haemolysin co-regulated protein 2a/Hcp2a. In turn, may allow the delivery of the Tle4 antibacterial toxin to target cells where it exerts its toxicity. Also promotes the release of VgrG2b toxin to the host cell. This Pseudomonas aeruginosa (strain ATCC 15692 / DSM 22644 / CIP 104116 / JCM 14847 / LMG 12228 / 1C / PRS 101 / PAO1) protein is Type VI secretion system spike protein VgrG2a.